We begin with the raw amino-acid sequence, 114 residues long: Ribonuclease P protein component (114 aa).

Belongs to the RnpA family. As to quaternary structure, consists of a catalytic RNA component (M1 or rnpB) and a protein subunit.

The catalysed reaction is Endonucleolytic cleavage of RNA, removing 5'-extranucleotides from tRNA precursor.. Its function is as follows. RNaseP catalyzes the removal of the 5'-leader sequence from pre-tRNA to produce the mature 5'-terminus. It can also cleave other RNA substrates such as 4.5S RNA. The protein component plays an auxiliary but essential role in vivo by binding to the 5'-leader sequence and broadening the substrate specificity of the ribozyme. The chain is Ribonuclease P protein component from Legionella pneumophila (strain Paris).